The primary structure comprises 221 residues: ATP synthase subunit delta (221 aa).

The span at 1–13 (MGPVPEEHQRESE) shows a compositional bias: basic and acidic residues. A disordered region spans residues 1–31 (MGPVPEEHQRESETVASNGANESGAAVTGIP).

This sequence belongs to the ATPase delta chain family. F-type ATPases have 2 components, F(1) - the catalytic core - and F(0) - the membrane proton channel. F(1) has five subunits: alpha(3), beta(3), gamma(1), delta(1), epsilon(1). F(0) has three main subunits: a(1), b(2) and c(10-14). The alpha and beta chains form an alternating ring which encloses part of the gamma chain. F(1) is attached to F(0) by a central stalk formed by the gamma and epsilon chains, while a peripheral stalk is formed by the delta and b chains.

The protein resides in the cell inner membrane. Its function is as follows. F(1)F(0) ATP synthase produces ATP from ADP in the presence of a proton or sodium gradient. F-type ATPases consist of two structural domains, F(1) containing the extramembraneous catalytic core and F(0) containing the membrane proton channel, linked together by a central stalk and a peripheral stalk. During catalysis, ATP synthesis in the catalytic domain of F(1) is coupled via a rotary mechanism of the central stalk subunits to proton translocation. Functionally, this protein is part of the stalk that links CF(0) to CF(1). It either transmits conformational changes from CF(0) to CF(1) or is implicated in proton conduction. In Granulibacter bethesdensis (strain ATCC BAA-1260 / CGDNIH1), this protein is ATP synthase subunit delta.